The following is a 65-amino-acid chain: Lantibiotic lacticin 3147 A2 (65 aa).

Positions 1-36 (MKEKNMKKNDTIELQLGKYLEDDMIELAEGDESHGG) are excised as a propeptide. Threonine 37 is subject to 2-oxobutanoic acid. 2 positions are modified to 2,3-didehydrobutyrine: threonine 38 and threonine 41. A 2,3-didehydroalanine (Ser) mark is found at serine 45 and serine 48. A cross-link (lanthionine (Ser-Cys)) is located at residues 52-56 (STNTC). 2 cross-links (beta-methyllanthionine (Thr-Cys)) span residues 58 to 61 (TTKC) and 62 to 65 (TRAC).

In terms of processing, maturation of lantibiotics involves the enzymatic conversion of Thr, and Ser into dehydrated AA and the formation of thioether bonds with cysteine. This is followed by membrane translocation and cleavage of the modified precursor. It is not established whether the 2,3-didehydrobutyrines are the E- or Z-isomers. In the NMR model they were assumed to be the Z-isomer.

The protein resides in the secreted. Functionally, lanthionine-containing peptide antibiotic (lantibiotic) active on Gram-positive bacteria. The bactericidal activity of lantibiotics is based on depolarization of energized bacterial cytoplasmic membranes, initiated by the formation of aqueous transmembrane pores. When present individually lacticin 3147 A2 exhibits weak activity towards L.lactis strain AM2 and L.lactis strain HP, and no activity towards L.lactis strain IFPL359, but when combined with lacticin 3147 A1 it displays strong activity towards all three strains. In Lactococcus lactis subsp. lactis (Streptococcus lactis), this protein is Lantibiotic lacticin 3147 A2.